The chain runs to 167 residues: Putative C-type lectin protein FPV008/FPV253 (167 aa).

Positions C49–C152 constitute a C-type lectin domain. 2 cysteine pairs are disulfide-bonded: C77–C152 and C131–C144.

The sequence is that of Putative C-type lectin protein FPV008/FPV253 from Vertebrata (FPV).